The chain runs to 581 residues: Amino-acid acetyltransferase, mitochondrial (581 aa).

Residues 401–558 (FTLHNLIEDE…RIVGSEAVNI (158 aa)) enclose the N-acetyltransferase domain.

Belongs to the acetyltransferase family.

The protein resides in the mitochondrion. It catalyses the reaction L-glutamate + acetyl-CoA = N-acetyl-L-glutamate + CoA + H(+). It participates in amino-acid biosynthesis; L-arginine biosynthesis; N(2)-acetyl-L-ornithine from L-glutamate: step 1/4. N-acetylglutamate synthase involved in arginine biosynthesis. This Scheffersomyces stipitis (strain ATCC 58785 / CBS 6054 / NBRC 10063 / NRRL Y-11545) (Yeast) protein is Amino-acid acetyltransferase, mitochondrial (ARG2).